The chain runs to 226 residues: Thiamine-phosphate synthase (226 aa).

4-amino-2-methyl-5-(diphosphooxymethyl)pyrimidine-binding positions include 46–50 (QLRDK) and Asn-87. Asp-88 and Asp-107 together coordinate Mg(2+). Position 126 (Ser-126) interacts with 4-amino-2-methyl-5-(diphosphooxymethyl)pyrimidine. Residue 152–154 (TPT) participates in 2-[(2R,5Z)-2-carboxy-4-methylthiazol-5(2H)-ylidene]ethyl phosphate binding. Residue Lys-155 participates in 4-amino-2-methyl-5-(diphosphooxymethyl)pyrimidine binding. Gly-183 lines the 2-[(2R,5Z)-2-carboxy-4-methylthiazol-5(2H)-ylidene]ethyl phosphate pocket.

It belongs to the thiamine-phosphate synthase family. The cofactor is Mg(2+).

It catalyses the reaction 2-[(2R,5Z)-2-carboxy-4-methylthiazol-5(2H)-ylidene]ethyl phosphate + 4-amino-2-methyl-5-(diphosphooxymethyl)pyrimidine + 2 H(+) = thiamine phosphate + CO2 + diphosphate. The enzyme catalyses 2-(2-carboxy-4-methylthiazol-5-yl)ethyl phosphate + 4-amino-2-methyl-5-(diphosphooxymethyl)pyrimidine + 2 H(+) = thiamine phosphate + CO2 + diphosphate. The catalysed reaction is 4-methyl-5-(2-phosphooxyethyl)-thiazole + 4-amino-2-methyl-5-(diphosphooxymethyl)pyrimidine + H(+) = thiamine phosphate + diphosphate. It functions in the pathway cofactor biosynthesis; thiamine diphosphate biosynthesis; thiamine phosphate from 4-amino-2-methyl-5-diphosphomethylpyrimidine and 4-methyl-5-(2-phosphoethyl)-thiazole: step 1/1. In terms of biological role, condenses 4-methyl-5-(beta-hydroxyethyl)thiazole monophosphate (THZ-P) and 2-methyl-4-amino-5-hydroxymethyl pyrimidine pyrophosphate (HMP-PP) to form thiamine monophosphate (TMP). This Mycobacterium sp. (strain JLS) protein is Thiamine-phosphate synthase.